Reading from the N-terminus, the 342-residue chain is D-alanine--D-alanine ligase (342 aa).

The region spanning 132–326 (KLYAKECGIE…VAKHLPKSKN (195 aa)) is the ATP-grasp domain. 159–210 (EYPVIIKPNHLGSSIGVSVVYDSSELEYALDVAFEFDDEVLIEPFIEGIEEY) is an ATP binding site. Mg(2+) is bound by residues Asp-282, Glu-294, and Asn-296.

Belongs to the D-alanine--D-alanine ligase family. Requires Mg(2+) as cofactor. The cofactor is Mn(2+).

Its subcellular location is the cytoplasm. The catalysed reaction is 2 D-alanine + ATP = D-alanyl-D-alanine + ADP + phosphate + H(+). It participates in cell wall biogenesis; peptidoglycan biosynthesis. Its function is as follows. Cell wall formation. The chain is D-alanine--D-alanine ligase from Nitratiruptor sp. (strain SB155-2).